The following is a 111-amino-acid chain: Small ubiquitin-related modifier 3 (111 aa).

The Ubiquitin-like domain maps to 16-93; sequence AHVILKVKSQ…IDACRAMSGG (78 aa). Gly93 is covalently cross-linked (Glycyl lysine isopeptide (Gly-Lys) (interchain with K-? in acceptor proteins)).

The protein belongs to the ubiquitin family. SUMO subfamily. In terms of assembly, interacts with SAE2, SCE1, SIZ1 and MMS21. Covalently attached to a number of proteins. Interacts with NPR1; this interaction promotes NPR1 phosphorylation and triggers its sumoylation and subsequent degradation.

Its subcellular location is the nucleus. The protein resides in the cytoplasm. In terms of biological role, ubiquitin-like protein which can be covalently attached to target lysines as a monomer. Does not seem to be involved in protein degradation and may function as an antagonist of ubiquitin in the degradation process. Promotes NPR1 sumoylation to activate defense gene expression and regulate its degradation. This chain is Small ubiquitin-related modifier 3, found in Arabidopsis thaliana (Mouse-ear cress).